We begin with the raw amino-acid sequence, 275 residues long: MSPLRVRLYDYRKADVERATFIIEETSAEFVNTIRRALYTLVPTLRIEEVIIYENDTPMYDEMLAHRLGLIPLRVDDIDQFELPDLCDCGGKGCEKCQVRAELEVEGPTKVYARDLKFDHPDVEPAFPDTLITEVGEDQRIRLEVIAVPGLGLEHAKWKPVSAVGYKGLPELEIDEDKLKEKKITYECPQGIIRIENGEVVHIDEDRLPECRMYKEYERETDGAVRVRLRDDAFVFNVETDGSMSLDTAILKALDAIEHKLESLKKNLQKEVSGE.

The protein belongs to the archaeal Rpo3/eukaryotic RPB3 RNA polymerase subunit family. In terms of assembly, part of the RNA polymerase complex.

The protein resides in the cytoplasm. The enzyme catalyses RNA(n) + a ribonucleoside 5'-triphosphate = RNA(n+1) + diphosphate. Its function is as follows. DNA-dependent RNA polymerase (RNAP) catalyzes the transcription of DNA into RNA using the four ribonucleoside triphosphates as substrates. This Methanopyrus kandleri (strain AV19 / DSM 6324 / JCM 9639 / NBRC 100938) protein is DNA-directed RNA polymerase subunit Rpo3.